The sequence spans 569 residues: Proline--tRNA ligase (569 aa).

It belongs to the class-II aminoacyl-tRNA synthetase family. ProS type 1 subfamily. Homodimer.

The protein resides in the cytoplasm. It carries out the reaction tRNA(Pro) + L-proline + ATP = L-prolyl-tRNA(Pro) + AMP + diphosphate. Functionally, catalyzes the attachment of proline to tRNA(Pro) in a two-step reaction: proline is first activated by ATP to form Pro-AMP and then transferred to the acceptor end of tRNA(Pro). As ProRS can inadvertently accommodate and process non-cognate amino acids such as alanine and cysteine, to avoid such errors it has two additional distinct editing activities against alanine. One activity is designated as 'pretransfer' editing and involves the tRNA(Pro)-independent hydrolysis of activated Ala-AMP. The other activity is designated 'posttransfer' editing and involves deacylation of mischarged Ala-tRNA(Pro). The misacylated Cys-tRNA(Pro) is not edited by ProRS. This chain is Proline--tRNA ligase, found in Shewanella woodyi (strain ATCC 51908 / MS32).